Reading from the N-terminus, the 287-residue chain is tRNA pseudouridine synthase B (287 aa).

The active-site Nucleophile is the Asp-37.

Belongs to the pseudouridine synthase TruB family. Type 1 subfamily.

It catalyses the reaction uridine(55) in tRNA = pseudouridine(55) in tRNA. Its function is as follows. Responsible for synthesis of pseudouridine from uracil-55 in the psi GC loop of transfer RNAs. The protein is tRNA pseudouridine synthase B of Caldicellulosiruptor saccharolyticus (strain ATCC 43494 / DSM 8903 / Tp8T 6331).